Consider the following 347-residue polypeptide: NADH-quinone oxidoreductase subunit H (347 aa).

Helical transmembrane passes span Leu13–Ile33, Ala82–Val102, Val115–Gly135, Ile161–Val181, Phe198–Leu218, Ala258–Val278, Val286–Val306, and Leu321–Leu341.

Belongs to the complex I subunit 1 family. As to quaternary structure, NDH-1 is composed of 14 different subunits. Subunits NuoA, H, J, K, L, M, N constitute the membrane sector of the complex.

The protein resides in the cell inner membrane. The enzyme catalyses a quinone + NADH + 5 H(+)(in) = a quinol + NAD(+) + 4 H(+)(out). In terms of biological role, NDH-1 shuttles electrons from NADH, via FMN and iron-sulfur (Fe-S) centers, to quinones in the respiratory chain. The immediate electron acceptor for the enzyme in this species is believed to be ubiquinone. Couples the redox reaction to proton translocation (for every two electrons transferred, four hydrogen ions are translocated across the cytoplasmic membrane), and thus conserves the redox energy in a proton gradient. This subunit may bind ubiquinone. The chain is NADH-quinone oxidoreductase subunit H from Rhizobium rhizogenes (strain K84 / ATCC BAA-868) (Agrobacterium radiobacter).